The chain runs to 558 residues: Nuclear speckle splicing regulatory protein 1 (558 aa).

The disordered stretch occupies residues 21–54 (PVLQKPSVFGNDSDDDDETSVSESLQREAAKKQA). Phosphoserine occurs at positions 27 and 33. Residues 104 to 170 (IHNLLKAVEI…REKRAAALEA (67 aa)) are a coiled coil. Residues 106 to 170 (NLLKAVEIRK…REKRAAALEA (65 aa)) form a necessary for alternative splicing activity region. Residues Lys199 and Lys210 each participate in a glycyl lysine isopeptide (Lys-Gly) (interchain with G-Cter in SUMO2) cross-link. A compositionally biased stretch (basic and acidic residues) spans 204–215 (EARSGIKEEKSR). The disordered stretch occupies residues 204–534 (EARSGIKEEK…KRNNEETVMS (331 aa)). Over residues 216–226 (GFSNEVSSKNR) the composition is skewed to polar residues. Phosphoserine is present on residues Ser248, Ser254, and Ser255. Basic and acidic residues predominate over residues 250 to 280 (FDAKSSADDEIEETRVNCRREKVIETPENDF). Thr275 carries the phosphothreonine modification. Lys281 is covalently cross-linked (Glycyl lysine isopeptide (Lys-Gly) (interchain with G-Cter in SUMO2)). Residues 299-310 (STRHHTKGSRTS) show a composition bias toward basic residues. 3 stretches are compositionally biased toward basic and acidic residues: residues 311–442 (RGHE…KREV), 449–487 (RNQDRKESSPNSRAKDKFLDQERSNKMRNMAKDKERNQE), and 501–517 (RLTEEGQEKGKEQERPP). A coiled-coil region spans residues 379–427 (KREKDREKYSQREQERDRQQNDQNRPSEKGEKEEKSKAKEEHMKVRKER). Ser457 bears the Phosphoserine mark.

This sequence belongs to the NSRP1 family. As to quaternary structure, interacts (via C-terminus) with SRSF1. Interacts (via C-terminus) with SRSF2. In terms of tissue distribution, expressed in dendritic cells, T-cells, B-cells and natural killer cells. Expressed in secondary lymphoid organs such as spleen and mesenteric, axillary and brachial lymph nodes.

It is found in the nucleus. It localises to the nucleus speckle. Functionally, RNA-binding protein that mediates pre-mRNA alternative splicing regulation. The sequence is that of Nuclear speckle splicing regulatory protein 1 (NSRP1) from Homo sapiens (Human).